The following is a 376-amino-acid chain: 3-dehydroquinate synthase (376 aa).

NAD(+)-binding positions include 115-119, 139-140, K152, and K161; these read GVIGD and TS. Positions 194, 256, and 275 each coordinate Zn(2+).

This sequence belongs to the sugar phosphate cyclases superfamily. Dehydroquinate synthase family. Requires Co(2+) as cofactor. Zn(2+) serves as cofactor. The cofactor is NAD(+).

It localises to the cytoplasm. The catalysed reaction is 7-phospho-2-dehydro-3-deoxy-D-arabino-heptonate = 3-dehydroquinate + phosphate. It functions in the pathway metabolic intermediate biosynthesis; chorismate biosynthesis; chorismate from D-erythrose 4-phosphate and phosphoenolpyruvate: step 2/7. Its function is as follows. Catalyzes the conversion of 3-deoxy-D-arabino-heptulosonate 7-phosphate (DAHP) to dehydroquinate (DHQ). In Rhizobium johnstonii (strain DSM 114642 / LMG 32736 / 3841) (Rhizobium leguminosarum bv. viciae), this protein is 3-dehydroquinate synthase.